Here is a 395-residue protein sequence, read N- to C-terminus: Elongation factor Tu (395 aa).

Positions 10–204 (KPHVNIGTIG…AVDNYIPHPV (195 aa)) constitute a tr-type G domain. Residues 19–26 (GHVDHGKT) are G1. 19–26 (GHVDHGKT) lines the GTP pocket. T26 is a Mg(2+) binding site. The interval 60-64 (GITIS) is G2. The interval 81–84 (DCPG) is G3. GTP-binding positions include 81–85 (DCPGH) and 136–139 (NKVD). Residues 136-139 (NKVD) form a G4 region. Positions 174-176 (SAL) are G5.

It belongs to the TRAFAC class translation factor GTPase superfamily. Classic translation factor GTPase family. EF-Tu/EF-1A subfamily. Monomer.

It is found in the cytoplasm. The catalysed reaction is GTP + H2O = GDP + phosphate + H(+). In terms of biological role, GTP hydrolase that promotes the GTP-dependent binding of aminoacyl-tRNA to the A-site of ribosomes during protein biosynthesis. The chain is Elongation factor Tu from Rickettsia akari (strain Hartford).